Here is an 819-residue protein sequence, read N- to C-terminus: DNA mismatch repair protein MutS (819 aa).

596–603 (GPNMSGKS) provides a ligand contact to ATP.

This sequence belongs to the DNA mismatch repair MutS family.

Its function is as follows. This protein is involved in the repair of mismatches in DNA. It is possible that it carries out the mismatch recognition step. This protein has a weak ATPase activity. This chain is DNA mismatch repair protein MutS, found in Thermosipho melanesiensis (strain DSM 12029 / CIP 104789 / BI429).